The following is a 338-amino-acid chain: Dihydroorotate dehydrogenase (quinone) (338 aa).

FMN contacts are provided by residues 59–63 (AGLDK) and Thr83. Lys63 contributes to the substrate binding site. 108–112 (NRMGF) is a substrate binding site. 2 residues coordinate FMN: Asn136 and Asn169. Asn169 contributes to the substrate binding site. Residue Ser172 is the Nucleophile of the active site. Asn174 lines the substrate pocket. FMN contacts are provided by Lys214 and Thr242. 243–244 (NT) provides a ligand contact to substrate. FMN-binding positions include Gly265, Gly294, and 315–316 (YS).

The protein belongs to the dihydroorotate dehydrogenase family. Type 2 subfamily. As to quaternary structure, monomer. The cofactor is FMN.

The protein resides in the cell membrane. It catalyses the reaction (S)-dihydroorotate + a quinone = orotate + a quinol. It participates in pyrimidine metabolism; UMP biosynthesis via de novo pathway; orotate from (S)-dihydroorotate (quinone route): step 1/1. In terms of biological role, catalyzes the conversion of dihydroorotate to orotate with quinone as electron acceptor. This is Dihydroorotate dehydrogenase (quinone) from Azoarcus sp. (strain BH72).